The sequence spans 35 residues: Pheromone-binding protein 1 (35 aa).

Belongs to the PBP/GOBP family. As to quaternary structure, homodimer. As to expression, antenna.

Its function is as follows. This major soluble protein in olfactory sensilla of male moths might serve to solubilize the extremely hydrophobic pheromone molecules and to transport pheromone through the aqueous lymph to receptors located on olfactory cilia. This chain is Pheromone-binding protein 1, found in Lymantria dispar (Gypsy moth).